Here is a 260-residue protein sequence, read N- to C-terminus: 14-3-3-like protein (260 aa).

This sequence belongs to the 14-3-3 family.

In Pisum sativum (Garden pea), this protein is 14-3-3-like protein.